The chain runs to 103 residues: MYAVIKSGGKQYRVQEGQTLKLEKLEVATGETLELDQVLLVADDDDVKVGAPLVEGAKVTAEVVSHGRGEKVKIIKFRRRKHQMRRQGHRQWFTEVKITGISA.

It belongs to the bacterial ribosomal protein bL21 family. As to quaternary structure, part of the 50S ribosomal subunit. Contacts protein L20.

In terms of biological role, this protein binds to 23S rRNA in the presence of protein L20. In Chromohalobacter salexigens (strain ATCC BAA-138 / DSM 3043 / CIP 106854 / NCIMB 13768 / 1H11), this protein is Large ribosomal subunit protein bL21.